Reading from the N-terminus, the 393-residue chain is NAD(P)H-quinone oxidoreductase subunit H, chloroplastic (393 aa).

This sequence belongs to the complex I 49 kDa subunit family. NDH is composed of at least 16 different subunits, 5 of which are encoded in the nucleus.

The protein localises to the plastid. The protein resides in the chloroplast thylakoid membrane. It catalyses the reaction a plastoquinone + NADH + (n+1) H(+)(in) = a plastoquinol + NAD(+) + n H(+)(out). The enzyme catalyses a plastoquinone + NADPH + (n+1) H(+)(in) = a plastoquinol + NADP(+) + n H(+)(out). Functionally, NDH shuttles electrons from NAD(P)H:plastoquinone, via FMN and iron-sulfur (Fe-S) centers, to quinones in the photosynthetic chain and possibly in a chloroplast respiratory chain. The immediate electron acceptor for the enzyme in this species is believed to be plastoquinone. Couples the redox reaction to proton translocation, and thus conserves the redox energy in a proton gradient. The sequence is that of NAD(P)H-quinone oxidoreductase subunit H, chloroplastic from Liriodendron tulipifera (Tuliptree).